The sequence spans 439 residues: GTPase Der (439 aa).

2 consecutive EngA-type G domains span residues 3-167 (PTVA…DKVG) and 176-351 (IKVA…GNYT). Residues 9-16 (GRPNVGKS), 56-60 (DTGGI), 119-122 (NKID), 182-189 (GKPNTGKS), 229-233 (DTAGL), and 294-297 (NKWD) each bind GTP. Residues 352–436 (RRITTGQIND…PIVFLIREKG (85 aa)) form the KH-like domain.

This sequence belongs to the TRAFAC class TrmE-Era-EngA-EngB-Septin-like GTPase superfamily. EngA (Der) GTPase family. Associates with the 50S ribosomal subunit.

In terms of biological role, GTPase that plays an essential role in the late steps of ribosome biogenesis. The sequence is that of GTPase Der from Caldicellulosiruptor saccharolyticus (strain ATCC 43494 / DSM 8903 / Tp8T 6331).